A 284-amino-acid chain; its full sequence is ATP phosphoribosyltransferase (284 aa).

It belongs to the ATP phosphoribosyltransferase family. Long subfamily. Mg(2+) serves as cofactor.

The protein localises to the cytoplasm. It carries out the reaction 1-(5-phospho-beta-D-ribosyl)-ATP + diphosphate = 5-phospho-alpha-D-ribose 1-diphosphate + ATP. It functions in the pathway amino-acid biosynthesis; L-histidine biosynthesis; L-histidine from 5-phospho-alpha-D-ribose 1-diphosphate: step 1/9. Feedback inhibited by histidine. In terms of biological role, catalyzes the condensation of ATP and 5-phosphoribose 1-diphosphate to form N'-(5'-phosphoribosyl)-ATP (PR-ATP). Has a crucial role in the pathway because the rate of histidine biosynthesis seems to be controlled primarily by regulation of HisG enzymatic activity. The chain is ATP phosphoribosyltransferase from Methanococcoides burtonii (strain DSM 6242 / NBRC 107633 / OCM 468 / ACE-M).